Here is a 257-residue protein sequence, read N- to C-terminus: Uxu operon transcriptional regulator (257 aa).

Residues 8 to 76 (QRPYQEVGAM…RGAGIYVLDN (69 aa)) form the HTH gntR-type domain. A DNA-binding region (H-T-H motif) is located at residues 36–55 (EREIAEMLDVTRTVVREALI).

Its function is as follows. Repressor for the uxuRBA operon. The protein is Uxu operon transcriptional regulator (uxuR) of Escherichia coli (strain K12).